The chain runs to 364 residues: Mannonate dehydratase (364 aa).

It belongs to the mannonate dehydratase family. Fe(2+) serves as cofactor. Mn(2+) is required as a cofactor.

The enzyme catalyses D-mannonate = 2-dehydro-3-deoxy-D-gluconate + H2O. It functions in the pathway carbohydrate metabolism; pentose and glucuronate interconversion. In terms of biological role, catalyzes the dehydration of D-mannonate. The protein is Mannonate dehydratase of Streptococcus equi subsp. zooepidemicus (strain MGCS10565).